A 245-amino-acid chain; its full sequence is Complement C1q subcomponent subunit A (245 aa).

Positions 1–22 (METSQGWLVACVLAVTLVWTVA) are cleaved as a signal peptide. Positions 31–109 (GKDGVAGIPG…KGVKGNPGNI (79 aa)) constitute a Collagen-like domain. Residues 35–111 (VAGIPGRPGR…VKGNPGNIRD (77 aa)) form a disordered region. 4-hydroxyproline occurs at positions 39 and 45. Residue K48 is modified to 5-hydroxylysine. A glycan (O-linked (Gal...) hydroxylysine) is linked at K48. P54 is modified (4-hydroxyproline). K67 bears the 5-hydroxylysine mark. O-linked (Gal...) hydroxylysine glycosylation occurs at K67. 4-hydroxyproline occurs at positions 79 and 85. Residue K100 is modified to 5-hydroxylysine. A glycan (O-linked (Gal...) hydroxylysine) is linked at K100. Residues 110 to 245 (RDQPRPAFSA…FSGFLIFPSA (136 aa)) form the C1q domain. An N-linked (GlcNAc...) asparagine glycan is attached at N146. An intrachain disulfide couples C172 to C190. Q199 contributes to the Ca(2+) binding site.

In terms of assembly, core component of the complement C1 complex, a calcium-dependent complex composed of 1 molecule of the C1Q subcomplex, 2 molecules of C1R and 2 molecules of C1S. The C1Q subcomplex is composed 18 subunits: 3 chains of C1QA, C1QB, and C1QC trimerize to form 6 collagen-like triple helices connected to six globular ligand-recognition modules (C1q domain). Interacts with CR1 (via Sushi 24 and Sushi 25 domains). Interacts (via C-terminus) with CD33; this interaction activates CD33 inhibitory motifs. O-linked glycans are assumed to be the Glc-Gal disaccharides typically found as secondary modifications of hydroxylated lysines in collagen-like domains.

The protein resides in the secreted. Its subcellular location is the cell surface. The C1Q subcomplex is inhibited by sulfated molecules, such as triterpenoid sulfates, heparan sulfate, or chondroitin sulfates. Functionally, core component of the complement C1 complex, a multiprotein complex that initiates the classical pathway of the complement system, a cascade of proteins that leads to phagocytosis and breakdown of pathogens and signaling that strengthens the adaptive immune system. The classical complement pathway is initiated by the C1Q subcomplex of the C1 complex, which specifically binds IgG or IgM immunoglobulins complexed with antigens, forming antigen-antibody complexes on the surface of pathogens: C1QA, together with C1QB and C1QC, specifically recognizes and binds the Fc regions of IgG or IgM via its C1q domain. Immunoglobulin-binding activates the proenzyme C1R, which cleaves C1S, initiating the proteolytic cascade of the complement system. The C1Q subcomplex is activated by a hexamer of IgG complexed with antigens, while it is activated by a pentameric IgM. The C1Q subcomplex also recognizes and binds phosphatidylserine exposed on the surface of cells undergoing programmed cell death, possibly promoting activation of the complement system. The protein is Complement C1q subcomponent subunit A of Rattus norvegicus (Rat).